A 183-amino-acid chain; its full sequence is MSGFISSTAAQGPPSPAIESYLFGCELSSKTKQYTFEVNEEDDAVHLVCLQTISLGAGAKDEHNVVEVTAPNYQNKEVTVPLANLKLSCQPMVNVGYFEIEAPVTFRLTSGSGPVFISGRHYVVASDDEDLSGSEEEMEDEEEEEDDDDDDDDDDDDDDDDDEEEITPIKPAKKPLKTLSRTF.

Residues 126 to 166 (SDDEDLSGSEEEMEDEEEEEDDDDDDDDDDDDDDDDDEEEI) are compositionally biased toward acidic residues. Residues 126-183 (SDDEDLSGSEEEMEDEEEEEDDDDDDDDDDDDDDDDDEEEITPIKPAKKPLKTLSRTF) are disordered.

The protein belongs to the nucleoplasmin family.

Its subcellular location is the nucleus. The protein localises to the nucleolus. This chain is Nucleoplasmin-like protein NO29, found in Xenopus laevis (African clawed frog).